The chain runs to 262 residues: Phosphomannomutase 1 (262 aa).

Alanine 2 carries the N-acetylalanine modification. The active-site Nucleophile is aspartate 19. 2 residues coordinate Mg(2+): aspartate 19 and aspartate 21. Aspartate 21 functions as the Proton donor/acceptor in the catalytic mechanism. Residues arginine 28, arginine 132, arginine 143, arginine 150, methionine 186, serine 188, and aspartate 190 each contribute to the alpha-D-mannose 1-phosphate site. Positions 218, 230, 232, and 235 each coordinate Mg(2+). Serine 242 carries the phosphoserine modification.

The protein belongs to the eukaryotic PMM family. Homodimer. Requires Mg(2+) as cofactor. As to expression, strong expression in liver, heart, brain, and pancreas; lower expression in skeletal muscle.

It localises to the cytoplasm. The enzyme catalyses alpha-D-mannose 1-phosphate = D-mannose 6-phosphate. The protein operates within nucleotide-sugar biosynthesis; GDP-alpha-D-mannose biosynthesis; alpha-D-mannose 1-phosphate from D-fructose 6-phosphate: step 2/2. Its activity is regulated as follows. IMP, a metabolite whose concentration is elevated in anoxia, inhibits phosphomannomutase and phosphoglucomutase activities and strongly enhances glucose-1,6-bisphosphatase activity. Functionally, involved in the synthesis of the GDP-mannose and dolichol-phosphate-mannose required for a number of critical mannosyl transfer reactions. In addition, may be responsible for the degradation of glucose-1,6-bisphosphate in ischemic brain. The sequence is that of Phosphomannomutase 1 (PMM1) from Homo sapiens (Human).